The following is a 268-amino-acid chain: Probable 6-phosphogluconolactonase 1 (268 aa).

Belongs to the glucosamine/galactosamine-6-phosphate isomerase family. 6-phosphogluconolactonase subfamily.

Its subcellular location is the cytoplasm. The protein localises to the cytosol. The enzyme catalyses 6-phospho-D-glucono-1,5-lactone + H2O = 6-phospho-D-gluconate + H(+). Its pathway is carbohydrate degradation; pentose phosphate pathway; D-ribulose 5-phosphate from D-glucose 6-phosphate (oxidative stage): step 2/3. Its function is as follows. Catalyzes the hydrolysis of 6-phosphogluconolactone to 6-phosphogluconate. The polypeptide is Probable 6-phosphogluconolactonase 1 (Arabidopsis thaliana (Mouse-ear cress)).